Here is a 698-residue protein sequence, read N- to C-terminus: Long-chain-fatty-acid--CoA ligase 1 (698 aa).

An N-acetylmethionine modification is found at Met-1. Tyr-9 bears the 3'-nitrotyrosine mark. Phosphotyrosine is present on Tyr-84. Residue Ser-135 is glycosylated (O-linked (GlcNAc) serine). An N6-acetyllysine mark is found at Lys-356 and Lys-386. Phosphoserine is present on Ser-620. Lys-632 is modified (N6-acetyllysine).

Belongs to the ATP-dependent AMP-binding enzyme family. It depends on Mg(2+) as a cofactor.

It is found in the microsome membrane. It localises to the mitochondrion outer membrane. Its subcellular location is the peroxisome membrane. The protein localises to the endoplasmic reticulum membrane. It carries out the reaction a long-chain fatty acid + ATP + CoA = a long-chain fatty acyl-CoA + AMP + diphosphate. The catalysed reaction is (5Z,8Z,11Z,14Z)-eicosatetraenoate + ATP + CoA = (5Z,8Z,11Z,14Z)-eicosatetraenoyl-CoA + AMP + diphosphate. It catalyses the reaction 3,7,11,15-tetramethylhexadecanoate + ATP + CoA = phytanoyl-CoA + AMP + diphosphate. The enzyme catalyses hexadecanoate + ATP + CoA = hexadecanoyl-CoA + AMP + diphosphate. It carries out the reaction (E)-hexadec-2-enoate + ATP + CoA = (2E)-hexadecenoyl-CoA + AMP + diphosphate. The catalysed reaction is 2,6,10,14-tetramethylpentadecanoate + ATP + CoA = pristanoyl-CoA + AMP + diphosphate. It catalyses the reaction 14,15-epoxy-(5Z,8Z,11Z)-eicosatrienoate + ATP + CoA = 14,15-epoxy-(5Z,8Z,11Z)-eicosatrienoyl-CoA + AMP + diphosphate. The enzyme catalyses 5-hydroxy-(6E,8Z,11Z,14Z)-eicosatetraenoate + ATP + CoA = 5-hydroxy-(6E,8Z,11Z,14Z)-eicosatetraenoyl-CoA + AMP + diphosphate. It carries out the reaction 12-hydroxy-(5Z,8Z,10E,14Z)-eicosatetraenoate + ATP + CoA = 12-hydroxy-(5Z,8Z,10E,14Z)-eicosatetraenoyl-CoA + AMP + diphosphate. The catalysed reaction is 15-hydroxy-(5Z,8Z,11Z,13E)-eicosatetraenoate + ATP + CoA = 15-hydroxy-(5Z,8Z,11Z,13E)-eicosatetraenoyl-CoA + AMP + diphosphate. It catalyses the reaction (9Z)-octadecenoate + ATP + CoA = (9Z)-octadecenoyl-CoA + AMP + diphosphate. Its activity is regulated as follows. Inhibited at high temperature and by arachidonate. In terms of biological role, catalyzes the conversion of long-chain fatty acids to their active form acyl-CoAs for both synthesis of cellular lipids, and degradation via beta-oxidation. Preferentially uses palmitoleate, oleate and linoleate. Preferentially activates arachidonate than epoxyeicosatrienoic acids (EETs) or hydroxyeicosatrienoic acids (HETEs). This chain is Long-chain-fatty-acid--CoA ligase 1, found in Cavia porcellus (Guinea pig).